The following is a 357-amino-acid chain: 3-isopropylmalate dehydrogenase (357 aa).

77–90 provides a ligand contact to NAD(+); the sequence is GPKWDTLPGEKRPE. Substrate contacts are provided by Arg-97, Arg-107, Arg-136, and Asp-224. Mg(2+)-binding residues include Asp-224, Asp-248, and Asp-252. Position 282–294 (282–294) interacts with NAD(+); sequence GSAPDIAGQDLAN.

The protein belongs to the isocitrate and isopropylmalate dehydrogenases family. LeuB type 1 subfamily. In terms of assembly, homodimer. Requires Mg(2+) as cofactor. It depends on Mn(2+) as a cofactor.

It is found in the cytoplasm. It catalyses the reaction (2R,3S)-3-isopropylmalate + NAD(+) = 4-methyl-2-oxopentanoate + CO2 + NADH. Its pathway is amino-acid biosynthesis; L-leucine biosynthesis; L-leucine from 3-methyl-2-oxobutanoate: step 3/4. Catalyzes the oxidation of 3-carboxy-2-hydroxy-4-methylpentanoate (3-isopropylmalate) to 3-carboxy-4-methyl-2-oxopentanoate. The product decarboxylates to 4-methyl-2 oxopentanoate. The polypeptide is 3-isopropylmalate dehydrogenase (Clostridium acetobutylicum (strain ATCC 824 / DSM 792 / JCM 1419 / IAM 19013 / LMG 5710 / NBRC 13948 / NRRL B-527 / VKM B-1787 / 2291 / W)).